Consider the following 209-residue polypeptide: Urease accessory protein UreG (209 aa).

11-18 is a GTP binding site; it reads GPVGSGKT.

It belongs to the SIMIBI class G3E GTPase family. UreG subfamily. Homodimer. UreD, UreF and UreG form a complex that acts as a GTP-hydrolysis-dependent molecular chaperone, activating the urease apoprotein by helping to assemble the nickel containing metallocenter of UreC. The UreE protein probably delivers the nickel.

It localises to the cytoplasm. Functionally, facilitates the functional incorporation of the urease nickel metallocenter. This process requires GTP hydrolysis, probably effectuated by UreG. In Edwardsiella ictaluri (strain 93-146), this protein is Urease accessory protein UreG.